The primary structure comprises 254 residues: Putative hydro-lyase SACE_1553 (254 aa).

It belongs to the D-glutamate cyclase family.

The polypeptide is Putative hydro-lyase SACE_1553 (Saccharopolyspora erythraea (strain ATCC 11635 / DSM 40517 / JCM 4748 / NBRC 13426 / NCIMB 8594 / NRRL 2338)).